A 445-amino-acid polypeptide reads, in one-letter code: Clusterin (445 aa).

The signal sequence occupies residues 1-22 (MMKTLLLLVGLLLTWDNGRVLG). Residues 78-81 (KKKK) carry the Nuclear localization signal motif. N-linked (GlcNAc...) asparagine glycosylation is found at asparagine 86 and asparagine 103. Cystine bridges form between cysteine 102–cysteine 309, cysteine 113–cysteine 301, cysteine 116–cysteine 298, cysteine 121–cysteine 291, and cysteine 129–cysteine 281. Residue serine 133 is modified to Phosphoserine. 5 N-linked (GlcNAc...) asparagine glycosylation sites follow: asparagine 145, asparagine 277, asparagine 287, asparagine 350, and asparagine 370. A Phosphoserine modification is found at serine 392. The Nuclear localization signal signature appears at 439–443 (RQKHR).

This sequence belongs to the clusterin family. In terms of assembly, antiparallel disulfide-linked heterodimer of an alpha chain and a beta chain. Self-associates and forms higher oligomers. Interacts with a broad range of misfolded proteins, including APP, APOC2 and LYZ. Slightly acidic pH promotes interaction with misfolded proteins. Forms high-molecular weight oligomers upon interaction with misfolded proteins. Interacts with APOA1, LRP2, CLUAP1 and PON1. Interacts with the complement membrane attack complex. Interacts (via alpha chain) with XRCC6. Interacts with SYVN1, COMMD1, BTRC, CUL1 and with ubiquitin and SCF (SKP1-CUL1-F-box protein) E3 ubiquitin-protein ligase complexes. Interacts (via alpha chain) with BAX in stressed cells, where BAX undergoes a conformation change leading to association with the mitochondrial membrane. Does not interact with BAX in unstressed cells. Found in a complex with LTF, CLU, EPPIN and SEMG1. Interacts (immaturely glycosylated pre-secreted form) with HSPA5; this interaction promotes CLU stability and facilitates stress-induced CLU retrotranslocation from the secretory pathway to the mitochondria, thereby reducing stress-induced apoptosis by stabilizing mitochondrial membrane integrity. Interacts with BCL2L1; this interaction releases and activates BAX and promotes cell death. Interacts with TGFBR2 and ACVR1. Interacts (secreted form) with STMN3; this interaction may act as an important modulator during neuronal differentiation. Interacts with VLDLR and LRP8. In terms of processing, proteolytically cleaved on its way through the secretory system, probably within the Golgi lumen. Proteolytic cleavage is not necessary for its chaperone activity. All non-secreted forms are not proteolytically cleaved. Chaperone activity of uncleaved forms is dependent on a non-reducing environment. This proteolytic maturation is disulfide bond formation dependent. Post-translationally, polyubiquitinated, leading to proteasomal degradation. Under cellular stress, the intracellular level of cleaved form is reduced due to proteasomal degradation. Heavily N-glycosylated. About 30% of the protein mass is comprised of complex N-linked carbohydrate. Endoplasmic reticulum (ER) stress induces changes in glycosylation status and increases level of hypoglycosylated forms. Core carbohydrates are essential for chaperone activity. Non-secreted forms are hypoglycosylated or unglycosylated.

It is found in the secreted. Its subcellular location is the nucleus. It localises to the cytoplasm. The protein resides in the mitochondrion membrane. The protein localises to the cytosol. It is found in the microsome. Its subcellular location is the endoplasmic reticulum. It localises to the mitochondrion. The protein resides in the perinuclear region. The protein localises to the cytoplasmic vesicle. It is found in the secretory vesicle. Its subcellular location is the chromaffin granule. Its function is as follows. Functions as extracellular chaperone that prevents aggregation of non native proteins. Prevents stress-induced aggregation of blood plasma proteins. Inhibits formation of amyloid fibrils by APP, APOC2, B2M, CALCA, CSN3, SNCA and aggregation-prone LYZ variants (in vitro). Does not require ATP. Maintains partially unfolded proteins in a state appropriate for subsequent refolding by other chaperones, such as HSPA8/HSC70. Does not refold proteins by itself. Binding to cell surface receptors triggers internalization of the chaperone-client complex and subsequent lysosomal or proteasomal degradation. When secreted, protects cells against apoptosis and against cytolysis by complement: inhibits assembly of the complement membrane attack complex (MAC) by preventing polymerization of C9 pore component of the MAC complex. Intracellular forms interact with ubiquitin and SCF (SKP1-CUL1-F-box protein) E3 ubiquitin-protein ligase complexes and promote the ubiquitination and subsequent proteasomal degradation of target proteins. Promotes proteasomal degradation of COMMD1 and IKBKB. Modulates NF-kappa-B transcriptional activity. Following stress, promotes apoptosis. Inhibits apoptosis when associated with the mitochondrial membrane by interference with BAX-dependent release of cytochrome c into the cytoplasm. Plays a role in the regulation of cell proliferation. An intracellular form suppresses stress-induced apoptosis by stabilizing mitochondrial membrane integrity through interaction with HSPA5. Secreted form does not affect caspase or BAX-mediated intrinsic apoptosis and TNF-induced NF-kappa-B-activity. Secreted form act as an important modulator during neuronal differentiation through interaction with STMN3. Plays a role in the clearance of immune complexes that arise during cell injury. This is Clusterin (CLU) from Canis lupus familiaris (Dog).